Consider the following 440-residue polypeptide: Serine hydroxymethyltransferase (440 aa).

Residues Leu-119 and 123 to 125 (GHL) contribute to the (6S)-5,6,7,8-tetrahydrofolate site. Residue Lys-228 is modified to N6-(pyridoxal phosphate)lysine. Residue 370–372 (SPF) participates in (6S)-5,6,7,8-tetrahydrofolate binding.

The protein belongs to the SHMT family. Homodimer. Requires pyridoxal 5'-phosphate as cofactor.

Its subcellular location is the cytoplasm. The enzyme catalyses (6R)-5,10-methylene-5,6,7,8-tetrahydrofolate + glycine + H2O = (6S)-5,6,7,8-tetrahydrofolate + L-serine. It functions in the pathway one-carbon metabolism; tetrahydrofolate interconversion. The protein operates within amino-acid biosynthesis; glycine biosynthesis; glycine from L-serine: step 1/1. Functionally, catalyzes the reversible interconversion of serine and glycine with tetrahydrofolate (THF) serving as the one-carbon carrier. This reaction serves as the major source of one-carbon groups required for the biosynthesis of purines, thymidylate, methionine, and other important biomolecules. Also exhibits THF-independent aldolase activity toward beta-hydroxyamino acids, producing glycine and aldehydes, via a retro-aldol mechanism. This is Serine hydroxymethyltransferase from Chlorobaculum tepidum (strain ATCC 49652 / DSM 12025 / NBRC 103806 / TLS) (Chlorobium tepidum).